A 393-amino-acid chain; its full sequence is MNRINILVPDLPESVNDAVVVKWYKKIGEQISSEDNIVDIETDKVMLEVSAPCNGILNEILEKEGSIVKSNQILGNIVESKNIESKTKSKLEKSNKYFIKDKNFNISFKEKIYNFPPSIRRIIRIKKNKEIFNELNYIKNQENIIEEKLNDQSFSNEKEKKIYENRIKMTRLRQKIAERLLETKNNTAMLTTFNEVNMQPIISLRKKYGEFFEKKHGVRIGFMPFFVKAVVESLKKFPEINASIDKNDIVYYKNIDVSIAVSTPRGVITPVLRNADNMSMADIEKKIKEFSIKGIENKIKIEELIGGNFTITNGGIFGSLMSTPIINPPQSAILGMHLIKERPMAINGKVKILPMMYLALSYDHRLIDGKESVSFLVTIKNILEDFNRIIINV.

A Lipoyl-binding domain is found at 3–78 (RINILVPDLP…KSNQILGNIV (76 aa)). Residue lysine 44 is modified to N6-lipoyllysine. Active-site residues include histidine 364 and aspartate 368.

Belongs to the 2-oxoacid dehydrogenase family. Forms a 24-polypeptide structural core with octahedral symmetry. Part of the 2-oxoglutarate dehydrogenase (OGDH) complex composed of E1 (2-oxoglutarate dehydrogenase), E2 (dihydrolipoamide succinyltransferase) and E3 (dihydrolipoamide dehydrogenase); the complex contains multiple copies of the three enzymatic components (E1, E2 and E3). (R)-lipoate is required as a cofactor.

It catalyses the reaction N(6)-[(R)-dihydrolipoyl]-L-lysyl-[protein] + succinyl-CoA = N(6)-[(R)-S(8)-succinyldihydrolipoyl]-L-lysyl-[protein] + CoA. It participates in amino-acid degradation; L-lysine degradation via saccharopine pathway; glutaryl-CoA from L-lysine: step 6/6. Functionally, E2 component of the 2-oxoglutarate dehydrogenase (OGDH) complex which catalyzes the second step in the conversion of 2-oxoglutarate to succinyl-CoA and CO(2). The polypeptide is Dihydrolipoyllysine-residue succinyltransferase component of 2-oxoglutarate dehydrogenase complex (sucB) (Buchnera aphidicola subsp. Schizaphis graminum (strain Sg)).